Here is a 343-residue protein sequence, read N- to C-terminus: Holliday junction branch migration complex subunit RuvB (343 aa).

Residues 1–185 (MMNENLDATG…FGISSRLQYY (185 aa)) form a large ATPase domain (RuvB-L) region. ATP-binding positions include L24, R25, G66, K69, T70, T71, 132 to 134 (EDY), R175, Y185, and R222. T70 provides a ligand contact to Mg(2+). A small ATPAse domain (RuvB-S) region spans residues 186–256 (STELLSGIVE…IAKFGLKALN (71 aa)). The tract at residues 259–343 (AHGLDEMDNK…GSNQGGLFDN (85 aa)) is head domain (RuvB-H). Residues R314 and R319 each contribute to the DNA site.

It belongs to the RuvB family. Homohexamer. Forms an RuvA(8)-RuvB(12)-Holliday junction (HJ) complex. HJ DNA is sandwiched between 2 RuvA tetramers; dsDNA enters through RuvA and exits via RuvB. An RuvB hexamer assembles on each DNA strand where it exits the tetramer. Each RuvB hexamer is contacted by two RuvA subunits (via domain III) on 2 adjacent RuvB subunits; this complex drives branch migration. In the full resolvosome a probable DNA-RuvA(4)-RuvB(12)-RuvC(2) complex forms which resolves the HJ.

It localises to the cytoplasm. It carries out the reaction ATP + H2O = ADP + phosphate + H(+). Functionally, the RuvA-RuvB-RuvC complex processes Holliday junction (HJ) DNA during genetic recombination and DNA repair, while the RuvA-RuvB complex plays an important role in the rescue of blocked DNA replication forks via replication fork reversal (RFR). RuvA specifically binds to HJ cruciform DNA, conferring on it an open structure. The RuvB hexamer acts as an ATP-dependent pump, pulling dsDNA into and through the RuvAB complex. RuvB forms 2 homohexamers on either side of HJ DNA bound by 1 or 2 RuvA tetramers; 4 subunits per hexamer contact DNA at a time. Coordinated motions by a converter formed by DNA-disengaged RuvB subunits stimulates ATP hydrolysis and nucleotide exchange. Immobilization of the converter enables RuvB to convert the ATP-contained energy into a lever motion, pulling 2 nucleotides of DNA out of the RuvA tetramer per ATP hydrolyzed, thus driving DNA branch migration. The RuvB motors rotate together with the DNA substrate, which together with the progressing nucleotide cycle form the mechanistic basis for DNA recombination by continuous HJ branch migration. Branch migration allows RuvC to scan DNA until it finds its consensus sequence, where it cleaves and resolves cruciform DNA. The protein is Holliday junction branch migration complex subunit RuvB of Christiangramia forsetii (strain DSM 17595 / CGMCC 1.15422 / KT0803) (Gramella forsetii).